We begin with the raw amino-acid sequence, 322 residues long: Transaldolase (322 aa).

The Schiff-base intermediate with substrate role is filled by K132.

It belongs to the transaldolase family. Type 1 subfamily. As to quaternary structure, homodimer.

The protein resides in the cytoplasm. The catalysed reaction is D-sedoheptulose 7-phosphate + D-glyceraldehyde 3-phosphate = D-erythrose 4-phosphate + beta-D-fructose 6-phosphate. It functions in the pathway carbohydrate degradation; pentose phosphate pathway; D-glyceraldehyde 3-phosphate and beta-D-fructose 6-phosphate from D-ribose 5-phosphate and D-xylulose 5-phosphate (non-oxidative stage): step 2/3. Functionally, transaldolase is important for the balance of metabolites in the pentose-phosphate pathway. This chain is Transaldolase, found in Protochlamydia amoebophila (strain UWE25).